Here is a 331-residue protein sequence, read N- to C-terminus: Ferredoxin--NADP reductase (331 aa).

Positions 14, 33, 41, 46, 86, 120, 284, and 327 each coordinate FAD.

This sequence belongs to the ferredoxin--NADP reductase type 2 family. Homodimer. FAD is required as a cofactor.

The catalysed reaction is 2 reduced [2Fe-2S]-[ferredoxin] + NADP(+) + H(+) = 2 oxidized [2Fe-2S]-[ferredoxin] + NADPH. This is Ferredoxin--NADP reductase from Picrophilus torridus (strain ATCC 700027 / DSM 9790 / JCM 10055 / NBRC 100828 / KAW 2/3).